Consider the following 216-residue polypeptide: Flagellin B3 (216 aa).

The propeptide occupies 1–11 (MLLDYIKSRRG).

The protein belongs to the archaeal flagellin family.

It is found in the archaeal flagellum. Its function is as follows. Flagellin is the subunit protein which polymerizes to form the filaments of archaeal flagella. The polypeptide is Flagellin B3 (flaB3) (Methanocaldococcus jannaschii (strain ATCC 43067 / DSM 2661 / JAL-1 / JCM 10045 / NBRC 100440) (Methanococcus jannaschii)).